Reading from the N-terminus, the 556-residue chain is Phosphoglucomutase (556 aa).

Residues Arg22 and Ser114 each coordinate alpha-D-glucose 1,6-bisphosphate. Ser114 (phosphoserine intermediate) is an active-site residue. Positions 114, 279, 281, and 283 each coordinate Mg(2+). At Ser114 the chain carries Phosphoserine. Positions 283, 284, 347, 366, 368, and 379 each coordinate alpha-D-glucose 1,6-bisphosphate.

Belongs to the phosphohexose mutase family. Monomer. Mg(2+) is required as a cofactor.

The protein resides in the cytoplasm. It carries out the reaction alpha-D-glucose 1-phosphate = alpha-D-glucose 6-phosphate. The catalysed reaction is O-phospho-L-seryl-[protein] + alpha-D-glucose 1-phosphate = alpha-D-glucose 1,6-bisphosphate + L-seryl-[protein]. The enzyme catalyses alpha-D-glucose 1,6-bisphosphate + L-seryl-[protein] = O-phospho-L-seryl-[protein] + alpha-D-glucose 6-phosphate. Functionally, catalyzes the reversible isomerization of alpha-D-glucose 1-phosphate to alpha-D-glucose 6-phosphate. The mechanism proceeds via the intermediate compound alpha-D-glucose 1,6-bisphosphate. Key enzyme in hexose metabolism. The reverse reaction is an essential step for biosynthesis because glucose 1-phosphate is the starting point for the synthesis of UDP-glucose, which acts as a precursor for the synthesis of oligosaccharides and trehalose. The protein is Phosphoglucomutase (pgmB) of Emericella nidulans (strain FGSC A4 / ATCC 38163 / CBS 112.46 / NRRL 194 / M139) (Aspergillus nidulans).